Reading from the N-terminus, the 177-residue chain is Large ribosomal subunit protein uL6 (177 aa).

Belongs to the universal ribosomal protein uL6 family. Part of the 50S ribosomal subunit.

Its function is as follows. This protein binds to the 23S rRNA, and is important in its secondary structure. It is located near the subunit interface in the base of the L7/L12 stalk, and near the tRNA binding site of the peptidyltransferase center. This Rickettsia peacockii (strain Rustic) protein is Large ribosomal subunit protein uL6.